We begin with the raw amino-acid sequence, 201 residues long: NADH-quinone oxidoreductase subunit C (201 aa).

It belongs to the complex I 30 kDa subunit family. NDH-1 is composed of 14 different subunits. Subunits NuoB, C, D, E, F, and G constitute the peripheral sector of the complex.

Its subcellular location is the cell inner membrane. It carries out the reaction a quinone + NADH + 5 H(+)(in) = a quinol + NAD(+) + 4 H(+)(out). In terms of biological role, NDH-1 shuttles electrons from NADH, via FMN and iron-sulfur (Fe-S) centers, to quinones in the respiratory chain. The immediate electron acceptor for the enzyme in this species is believed to be ubiquinone. Couples the redox reaction to proton translocation (for every two electrons transferred, four hydrogen ions are translocated across the cytoplasmic membrane), and thus conserves the redox energy in a proton gradient. This chain is NADH-quinone oxidoreductase subunit C, found in Dechloromonas aromatica (strain RCB).